Here is a 331-residue protein sequence, read N- to C-terminus: GTP-binding protein RHO5 (331 aa).

Residue 10 to 17 (GDGAVGKT) participates in GTP binding. Residues 51–76 (ASSPLELDNGNDKRGSLSSASSSPST) are disordered. Positions 66 to 75 (SLSSASSSPS) are enriched in low complexity. GTP-binding positions include 87 to 91 (DTAGQ) and 156 to 159 (TKSD). A phosphoserine mark is found at serine 223 and serine 228. Residues threonine 232 and threonine 244 each carry the phosphothreonine modification. The tract at residues 239 to 331 (TATTNTNGDK…KKKKSKCVIL (93 aa)) is disordered. The segment covering 258-273 (HHNNSTDSTLPKGSLQ) has biased composition (polar residues). A Glycyl lysine isopeptide (Lys-Gly) (interchain with G-Cter in ubiquitin) cross-link involves residue lysine 276. Over residues 287–297 (GQKDKIHEQSK) the composition is skewed to basic and acidic residues. The span at 308-331 (HHNKQAKPKTRNDKKKKKSKCVIL) shows a compositional bias: basic residues. At cysteine 328 the chain carries Cysteine methyl ester. Residue cysteine 328 is the site of S-geranylgeranyl cysteine attachment. Residues 329–331 (VIL) constitute a propeptide, removed in mature form.

The protein belongs to the small GTPase superfamily. Rho family. In terms of assembly, interacts with RGD2.

It localises to the membrane. Its subcellular location is the mitochondrion. In terms of biological role, small GTPase that negatively regulates a MAP kinase branch, downstream of SLT2, of the PKC1-mediated signal transduction pathway. With its specific guanine nucleotide exchange factor (GEF), the heterodimeric complex DCK1/LMO1, relocates to mitochondria upon oxidative stress and triggers cell death. The DCK1/LMO1/RHO5 signaling module that mediates mitochondrial turnover under nitrogen starvation conditions via mitophagy. The DCK1/LMO1/RHO5 signaling module also plays a role in cell wall integrity signaling. The sequence is that of GTP-binding protein RHO5 from Saccharomyces cerevisiae (strain ATCC 204508 / S288c) (Baker's yeast).